The chain runs to 360 residues: Peptide chain release factor 1 (360 aa).

N5-methylglutamine is present on Q235. A compositionally biased stretch (basic and acidic residues) spans 291–308 (ASERRNLLGTGDRSDRNR). A disordered region spans residues 291 to 312 (ASERRNLLGTGDRSDRNRTYNF).

The protein belongs to the prokaryotic/mitochondrial release factor family. Post-translationally, methylated by PrmC. Methylation increases the termination efficiency of RF1.

It localises to the cytoplasm. In terms of biological role, peptide chain release factor 1 directs the termination of translation in response to the peptide chain termination codons UAG and UAA. The chain is Peptide chain release factor 1 from Yersinia pseudotuberculosis serotype O:1b (strain IP 31758).